Reading from the N-terminus, the 288-residue chain is Mortality factor 4-like protein 2 (288 aa).

The segment covering 1–15 (MSSRKQGSQPRGQQS) has biased composition (polar residues). The interval 1 to 113 (MSSRKQGSQP…RADPTVESEE (113 aa)) is disordered. Phosphoserine is present on serine 71. Residues 117 to 288 (NRMEVKVKIP…ASAEYHRKAL (172 aa)) enclose the MRG domain.

In terms of assembly, component of the NuA4 histone acetyltransferase complex which contains the catalytic subunit KAT5/TIP60 and the subunits EP400, TRRAP/PAF400, BRD8/SMAP, EPC1, DMAP1/DNMAP1, RUVBL1/TIP49, RUVBL2, ING3, actin, ACTL6A/BAF53A, MORF4L1/MRG15, MORF4L2/MRGX, MRGBP, YEATS4/GAS41 and VPS72/YL1. The NuA4 complex interacts with MYC and the adenovirus E1A protein. MORF4L1 may also participate in the formation of NuA4 related complexes which lack the KAT5/TIP60 catalytic subunit, but which include the SWI/SNF related protein SRCAP. Component of the MSIN3A histone deacetylase complex, which includes SIN3A, HDAC2, ARID4B, MORF4L1, RBBP4/RbAp48, and RBBP7/RbAp46. Interacts with MRFAP1 and RB1. May also interact with one or more as yet undefined members of the TLE (transducin-like enhancer of split) family of transcriptional repressors.

It is found in the nucleus. Component of the NuA4 histone acetyltransferase complex which is involved in transcriptional activation of select genes principally by acetylation of nucleosomal histone H4 and H2A. This modification may both alter nucleosome - DNA interactions and promote interaction of the modified histones with other proteins which positively regulate transcription. This complex may be required for the activation of transcriptional programs associated with oncogene and proto-oncogene mediated growth induction, tumor suppressor mediated growth arrest and replicative senescence, apoptosis, and DNA repair. The NuA4 complex ATPase and helicase activities seem to be, at least in part, contributed by the association of RUVBL1 and RUVBL2 with EP400. NuA4 may also play a direct role in DNA repair when directly recruited to sites of DNA damage. Also a component of the MSIN3A complex which acts to repress transcription by deacetylation of nucleosomal histones. The chain is Mortality factor 4-like protein 2 (MORF4L2) from Homo sapiens (Human).